A 231-amino-acid polypeptide reads, in one-letter code: Tol-Pal system protein TolQ (231 aa).

A run of 3 helical transmembrane segments spans residues 20–40, 134–154, and 176–196; these read IVVQLVMLTLVAASVTSWIMI, FLATVGSTSPYVGLFGTVWGI, and IAEALIATAIGLFAAIPAVIA.

It belongs to the ExbB/TolQ family. In terms of assembly, the Tol-Pal system is composed of five core proteins: the inner membrane proteins TolA, TolQ and TolR, the periplasmic protein TolB and the outer membrane protein Pal. They form a network linking the inner and outer membranes and the peptidoglycan layer.

The protein localises to the cell inner membrane. Its function is as follows. Part of the Tol-Pal system, which plays a role in outer membrane invagination during cell division and is important for maintaining outer membrane integrity. The sequence is that of Tol-Pal system protein TolQ from Pseudomonas aeruginosa (strain ATCC 15692 / DSM 22644 / CIP 104116 / JCM 14847 / LMG 12228 / 1C / PRS 101 / PAO1).